Consider the following 57-residue polypeptide: LECYQKSKVVTCQPEQKFCYSDTTMFFPNHPVYLSGCTFSCTEEGNRRCCTTDKCNR.

Intrachain disulfides connect cysteine 3–cysteine 19, cysteine 12–cysteine 37, cysteine 41–cysteine 49, and cysteine 50–cysteine 55.

Belongs to the three-finger toxin family. Short-chain subfamily. Orphan group XX sub-subfamily. As to expression, expressed by the venom gland.

It localises to the secreted. Its function is as follows. Anticoagulant protein that prevents the activation of factor X (F10). It acts by potently inhibiting the extrinsic tenase complex (ETC) (IC(50)=116.49 nM), a complex composed by active factor VII (F7a), tissue factor (TF) and F10. In addition, it shows weaker activities on other complexes. It weakly inhibits F10 activation by inhibiting the intrinsic tenase complex (IC(50)=4.05 uM), a complex composed by active factor IX (IXa, F9a), its cofactor factor VIII (VIIIa, F8a), and their substrate F10. It also weakly prevents prothrombin activation by inhibiting the prothrombinase complex (IC(50)=17.66 uM). It shows high kinetic constant towards F7a/TF/F10/phospholipids complex (Ki=30.62 nM) and lower kinetic constant towards F7a/TF/phospholipids complex (Ki=153.75 nM). The chain is Exactin from Hemachatus haemachatus (Rinkhals).